The following is a 510-amino-acid chain: Glycogen synthase (510 aa).

An ADP-alpha-D-glucose-binding site is contributed by lysine 18.

Belongs to the glycosyltransferase 1 family. Bacterial/plant glycogen synthase subfamily.

It carries out the reaction [(1-&gt;4)-alpha-D-glucosyl](n) + ADP-alpha-D-glucose = [(1-&gt;4)-alpha-D-glucosyl](n+1) + ADP + H(+). Its pathway is glycan biosynthesis; glycogen biosynthesis. Synthesizes alpha-1,4-glucan chains using ADP-glucose. The polypeptide is Glycogen synthase (Bordetella parapertussis (strain 12822 / ATCC BAA-587 / NCTC 13253)).